Here is a 117-residue protein sequence, read N- to C-terminus: MIVGIGIDLIELKRIEAAFARQPRFPGRVLTSYEQDQMAQLAPNRQIEYLAGRFAAKEAFAKAKGTGIGAGLSWHDIEIRTEGSGKPYIVVNDDSARVHLSITHSKEYAAAQVVIET.

Asp8 and Glu58 together coordinate Mg(2+).

This sequence belongs to the P-Pant transferase superfamily. AcpS family. Requires Mg(2+) as cofactor.

It localises to the cytoplasm. It catalyses the reaction apo-[ACP] + CoA = holo-[ACP] + adenosine 3',5'-bisphosphate + H(+). In terms of biological role, transfers the 4'-phosphopantetheine moiety from coenzyme A to a Ser of acyl-carrier-protein. The sequence is that of Holo-[acyl-carrier-protein] synthase from Shouchella clausii (strain KSM-K16) (Alkalihalobacillus clausii).